The chain runs to 961 residues: Phosphofurin acidic cluster sorting protein 1 (961 aa).

The span at 1 to 19 shows a compositional bias: gly residues; the sequence is MAERGGAGGGPGGSGGGSS. Disordered stretches follow at residues 1–70 and 76–95; these read MAER…SSST and VAVA…RTPA. Alanine 2 is modified (N-acetylalanine). Residues 20–34 show a composition bias toward low complexity; the sequence is QRGSGVAQSPQQQPQ. Serine 28 carries the post-translational modification Phosphoserine. Residues 35–46 show a composition bias toward pro residues; sequence QQPPQPQQPTPP. Threonine 44 bears the Phosphothreonine mark. Positions 51–70 are enriched in low complexity; that stretch reads ATSSSSSTSAAAASSSSSST. Position 249 is a phosphotyrosine (tyrosine 249). A compositionally biased stretch (basic and acidic residues) spans 260-271; sequence GIKSKLSDRSPD. 2 disordered regions span residues 260–297 and 375–426; these read GIKS…LHGQ and NPSD…GKDT. Over residues 274–291 the composition is skewed to acidic residues; it reads NYSEEEEESFSSEQEGSD. Residues 351-375 adopt a coiled-coil conformation; the sequence is HVSREQIREVEEDLDELYDSLEMYN. Phosphoserine is present on residues serine 377 and serine 379. The span at 404 to 426 shows a compositional bias: polar residues; that stretch reads MSQSSSQTEIGSLNSKGSLGKDT. Residues serine 428 and serine 493 each carry the phosphoserine modification. 2 disordered regions span residues 475-540 and 758-802; these read EKVK…HSTQ and SPST…SMSS. Phosphothreonine is present on threonine 502. 5 positions are modified to phosphoserine: serine 517, serine 526, serine 527, serine 529, and serine 532. The span at 768 to 802 shows a compositional bias: low complexity; sequence SPVVSLTVPSTSPPSSSGLSRDATATPPSSPSMSS.

It belongs to the PACS family. Associates with AP-1 and AP-3 but not with AP-2 complexes. Interacts with FURIN. Forms a ternary complex with FURIN and AP-1. Interacts with PKD2 (via acidic region). Interacts with SORL1. Interacts with WDR37.

It localises to the golgi apparatus. The protein resides in the trans-Golgi network. Functionally, coat protein that is involved in the localization of trans-Golgi network (TGN) membrane proteins that contain acidic cluster sorting motifs. Controls the endosome-to-Golgi trafficking of furin and mannose-6-phosphate receptor by connecting the acidic-cluster-containing cytoplasmic domain of these molecules with the adapter-protein complex-1 (AP-1) of endosomal clathrin-coated membrane pits. Required for normal ER Ca2+ handling in lymphocytes. Together with WDR37, it plays an essential role in lymphocyte development, quiescence and survival. Required for stabilizing peripheral lymphocyte populations. This Mus musculus (Mouse) protein is Phosphofurin acidic cluster sorting protein 1 (Pacs1).